The following is a 61-amino-acid chain: Large ribosomal subunit protein uL30 (61 aa).

It belongs to the universal ribosomal protein uL30 family. As to quaternary structure, part of the 50S ribosomal subunit.

The polypeptide is Large ribosomal subunit protein uL30 (Clostridioides difficile (strain 630) (Peptoclostridium difficile)).